The chain runs to 225 residues: Biosynthetic peptidoglycan transglycosylase (225 aa).

The helical transmembrane segment at 12-32 (IWFVAWRFLLLFVIVLFLFRF) threads the bilayer.

The protein belongs to the glycosyltransferase 51 family.

The protein localises to the cell inner membrane. It catalyses the reaction [GlcNAc-(1-&gt;4)-Mur2Ac(oyl-L-Ala-gamma-D-Glu-L-Lys-D-Ala-D-Ala)](n)-di-trans,octa-cis-undecaprenyl diphosphate + beta-D-GlcNAc-(1-&gt;4)-Mur2Ac(oyl-L-Ala-gamma-D-Glu-L-Lys-D-Ala-D-Ala)-di-trans,octa-cis-undecaprenyl diphosphate = [GlcNAc-(1-&gt;4)-Mur2Ac(oyl-L-Ala-gamma-D-Glu-L-Lys-D-Ala-D-Ala)](n+1)-di-trans,octa-cis-undecaprenyl diphosphate + di-trans,octa-cis-undecaprenyl diphosphate + H(+). It functions in the pathway cell wall biogenesis; peptidoglycan biosynthesis. Functionally, peptidoglycan polymerase that catalyzes glycan chain elongation from lipid-linked precursors. The sequence is that of Biosynthetic peptidoglycan transglycosylase from Marinomonas sp. (strain MWYL1).